The primary structure comprises 360 residues: Phospho-N-acetylmuramoyl-pentapeptide-transferase (360 aa).

The next 10 helical transmembrane spans lie at 27 to 47 (GAVM…IEWL), 73 to 93 (TMGG…WADL), 98 to 118 (VWAV…DDYL), 134 to 154 (LVAQ…LGQG), 168 to 188 (LTFN…VGAS), 199 to 219 (GLAI…AYLV), 239 to 259 (LAVF…FNAP), 263 to 283 (VFMG…VSVV), 288 to 308 (IVLA…IVQV), and 337 to 357 (TVVI…LSTL).

This sequence belongs to the glycosyltransferase 4 family. MraY subfamily. Requires Mg(2+) as cofactor.

The protein resides in the cell inner membrane. The catalysed reaction is UDP-N-acetyl-alpha-D-muramoyl-L-alanyl-gamma-D-glutamyl-meso-2,6-diaminopimeloyl-D-alanyl-D-alanine + di-trans,octa-cis-undecaprenyl phosphate = di-trans,octa-cis-undecaprenyl diphospho-N-acetyl-alpha-D-muramoyl-L-alanyl-D-glutamyl-meso-2,6-diaminopimeloyl-D-alanyl-D-alanine + UMP. The protein operates within cell wall biogenesis; peptidoglycan biosynthesis. In terms of biological role, catalyzes the initial step of the lipid cycle reactions in the biosynthesis of the cell wall peptidoglycan: transfers peptidoglycan precursor phospho-MurNAc-pentapeptide from UDP-MurNAc-pentapeptide onto the lipid carrier undecaprenyl phosphate, yielding undecaprenyl-pyrophosphoryl-MurNAc-pentapeptide, known as lipid I. In Rhodospirillum rubrum (strain ATCC 11170 / ATH 1.1.1 / DSM 467 / LMG 4362 / NCIMB 8255 / S1), this protein is Phospho-N-acetylmuramoyl-pentapeptide-transferase.